A 221-amino-acid polypeptide reads, in one-letter code: Small ribosomal subunit protein eS1 (221 aa).

This sequence belongs to the eukaryotic ribosomal protein eS1 family.

The polypeptide is Small ribosomal subunit protein eS1 (Pyrobaculum aerophilum (strain ATCC 51768 / DSM 7523 / JCM 9630 / CIP 104966 / NBRC 100827 / IM2)).